Consider the following 405-residue polypeptide: Dynactin subunit 2 (405 aa).

Positions 1–24 (MADPKYADLPGIARNEPDVYETSD) are disordered. Residues 101 to 134 (PQQKYQRLLHEIQELTQEVEKAQSTVKESAAEEK) are a coiled coil. The disordered stretch occupies residues 186 to 207 (AKTRKNPEGKSPAKGPGPDNEN). Residues 383-403 (KENLATVEDNFTSIDARIKKL) adopt a coiled-coil conformation.

It belongs to the dynactin subunit 2 family. In terms of assembly, subunit of dynactin, a multiprotein complex part of a tripartite complex with dynein and a adapter, such as BICDL1, BICD2 or HOOK3. The dynactin complex is built around ACTR1A/ACTB filament and consists of an actin-related filament composed of a shoulder domain, a pointed end and a barbed end. Its length is defined by its flexible shoulder domain. The soulder is composed of 2 DCTN1 subunits, 4 DCTN2 and 2 DCTN3.

The protein localises to the cytoplasm. It localises to the cytoskeleton. Its subcellular location is the microtubule organizing center. It is found in the centrosome. The protein resides in the membrane. In terms of biological role, part of the dynactin complex that activates the molecular motor dynein for ultra-processive transport along microtubules. In the dynactin soulder domain, binds the ACTR1A filament and acts as a molecular ruler to determine the length. Modulates cytoplasmic dynein binding to an organelle, and plays a role in prometaphase chromosome alignment and spindle organization during mitosis. Involved in anchoring microtubules to centrosomes. The polypeptide is Dynactin subunit 2 (dctn2) (Xenopus tropicalis (Western clawed frog)).